We begin with the raw amino-acid sequence, 350 residues long: tRNA uridine(34) hydroxylase (350 aa).

Residues 146 to 240 form the Rhodanese domain; that stretch reads DDPDAVFIDM…YARRAREQGL (95 aa). C200 acts as the Cysteine persulfide intermediate in catalysis. Residues 319 to 328 show a composition bias toward basic and acidic residues; the sequence is RRRRAGRENG. Positions 319–350 are disordered; the sequence is RRRRAGRENGNKIFNKSRGRLNSKLSIPDPAE.

This sequence belongs to the TrhO family.

The catalysed reaction is uridine(34) in tRNA + AH2 + O2 = 5-hydroxyuridine(34) in tRNA + A + H2O. Its function is as follows. Catalyzes oxygen-dependent 5-hydroxyuridine (ho5U) modification at position 34 in tRNAs. This is tRNA uridine(34) hydroxylase from Salmonella schwarzengrund (strain CVM19633).